The primary structure comprises 1018 residues: MEDGHSKTVDEVLSHFRVDPERGLSLDQVKEYQKKYGPNELPAEEGKTLWQLVLEQFDDLLVKILLLAAIISFVLALFEEHEGVEAFVEPFVILLILIANAVVGVWQERNAESAIEALKEYEPEMGKVIRGDKSGVQKIRAKEIVPGDVVEVSVGDKIPADIRLIKIYSTTIRIDQSILTGESVSVIKHTDAVPDPRAVNQDKKNILFSGTNVAAGKARGVVIGTGLNTAIGKIRTEMSETEEIKTPLQQKLDEFGEQLSKVISLICVAVWAINIGHFNDPAHGGSWIKGAVYYFKIAVALAVAAIPEGLPAVITTCLALGTRRMAKKNAIVRSLPSVETLGCTSVICSDKTGTLTTNQMSVSRMFIFEKIEGNDSSFTEFEISGSTYEPIGEVTLNGQRIKAADYETLHELGTICIMCNDSAIDFNETKKVFEKVGEATETALIVLAEKLNPFNVAKQGLDRRSSAICVRQEIETKWKKEFTLEFSRDRKSMSSYCTPLKASKLGNGPKLFCKGAPEGVLERCTHARVGSTKVPLTQTLKQRILDLTRTYGTGRDTLRCLALATADSPMKPDDMDLNDSTKFYTYEVNLTFVGVVGMLDPPRKEVQDSIVRCRAAGIRVIVITGDNKATAEAICRRIGVFGEDEDTTGKSYSGREFDDLSVSEQREACSRARLFSRVEPAHKSKIVEFLQSMNEISAMTGDGVNDAPALKKAEIGIAMGSGTAVAKSAAEMVLADDNFSSIVAAVEEGRAIYNNMKQFIRYLISSNIGEVVSIFLTAALGLPEALIPVQLLWVNLVTDGLPATALGFNPPDLDIMTKPPRKADEGLISGWLFFRYMAIGGYVGCATVGGAAWWFMFSETGPQLSYWQLTHHLSCLGGGEEFKGIDCKIFNDPHPMTMALSVLVTIEMLNAMNSLSENQSLVQMPPWCNIWLIASMCLSFALHFVILYVDVLSTVFQVTPLDGNEWMTVMKFSLPVVLLDEILKFVARRISDGESYIKNMHGLVLAWAVFFAYIIWGP.

Residues 1 to 48 (MEDGHSKTVDEVLSHFRVDPERGLSLDQVKEYQKKYGPNELPAEEGKT) lie on the Cytoplasmic side of the membrane. Residues 49–69 (LWQLVLEQFDDLLVKILLLAA) traverse the membrane as a helical segment. Topologically, residues 70-88 (IISFVLALFEEHEGVEAFV) are lumenal. Residues 89 to 109 (EPFVILLILIANAVVGVWQER) form a helical membrane-spanning segment. At 110–252 (NAESAIEALK…EIKTPLQQKL (143 aa)) the chain is on the cytoplasmic side. A helical transmembrane segment spans residues 253-272 (DEFGEQLSKVISLICVAVWA). Over 273–294 (INIGHFNDPAHGGSWIKGAVYY) the chain is Lumenal. The chain crosses the membrane as a helical span at residues 295-312 (FKIAVALAVAAIPEGLPA). Residues Val-303, Ala-304, Ile-306, and Glu-308 each coordinate Ca(2+). Over 313-756 (VITTCLALGT…EEGRAIYNNM (444 aa)) the chain is Cytoplasmic. Asp-350 functions as the 4-aspartylphosphate intermediate in the catalytic mechanism. 2 residues coordinate Mg(2+): Asp-702 and Asp-706. Residues 757–776 (KQFIRYLISSNIGEVVSIFL) traverse the membrane as a helical segment. Positions 767 and 770 each coordinate Ca(2+). At 777–786 (TAALGLPEAL) the chain is on the lumenal side. A helical membrane pass occupies residues 787 to 807 (IPVQLLWVNLVTDGLPATALG). Ca(2+) contacts are provided by Asn-795, Thr-798, and Asp-799. Residues 808-827 (FNPPDLDIMTKPPRKADEGL) lie on the Cytoplasmic side of the membrane. The chain crosses the membrane as a helical span at residues 828–850 (ISGWLFFRYMAIGGYVGCATVGG). Residues 851–896 (AAWWFMFSETGPQLSYWQLTHHLSCLGGGEEFKGIDCKIFNDPHPM) lie on the Lumenal side of the membrane. Residues 897–916 (TMALSVLVTIEMLNAMNSLS) traverse the membrane as a helical segment. Position 907 (Glu-907) interacts with Ca(2+). At 917-929 (ENQSLVQMPPWCN) the chain is on the cytoplasmic side. Residues 930-948 (IWLIASMCLSFALHFVILY) traverse the membrane as a helical segment. At 949–963 (VDVLSTVFQVTPLDG) the chain is on the lumenal side. The helical transmembrane segment at 964 to 984 (NEWMTVMKFSLPVVLLDEILK) threads the bilayer. Over 985–1018 (FVARRISDGESYIKNMHGLVLAWAVFFAYIIWGP) the chain is Cytoplasmic.

It belongs to the cation transport ATPase (P-type) (TC 3.A.3) family.

It localises to the endoplasmic reticulum membrane. The protein resides in the sarcoplasmic reticulum membrane. It carries out the reaction Ca(2+)(in) + ATP + H2O = Ca(2+)(out) + ADP + phosphate + H(+). In terms of biological role, this magnesium-dependent enzyme catalyzes the hydrolysis of ATP coupled with the transport of calcium. The protein is Calcium-transporting ATPase sarcoplasmic/endoplasmic reticulum type of Anopheles gambiae (African malaria mosquito).